A 358-amino-acid chain; its full sequence is Putative ankyrin repeat protein FPV242 (358 aa).

10 ANK repeats span residues 6–35, 40–69, 91–118, 119–147, 149–177, 180–209, 214–243, 248–277, 280–312, and 316–345; these read NNYRKLRKAIINEDIEEIKYIIEKDPNMIV, NNHTLLHIAIMYRKVNAVKVLLDKGDNLVY, TRRNKISNALEKINNHKKIIEALVDKGV, ELTGLEIALSCKNIWLIKFLIEKGISVEY, GFFPVGVNYNTIDIDICKVLLENKIDINK, CGETLVRYAIRSSDLNLLKYLISKGADIEK, EQDPNIIEAVEKGNLGIVEYLIDNGISIDT, NHKPAIYYAILAGHYNMVDLLLRRGANPFI, EGNTSLISVATQAKRNRLKLINLLLKYGVRLPG, and YYIQPILLDYSYETYNIIHILLEHGLRITS.

The chain is Putative ankyrin repeat protein FPV242 from Fowlpox virus (strain NVSL) (FPV).